We begin with the raw amino-acid sequence, 342 residues long: Cytosolic Fe-S cluster assembly factor NBP35 (342 aa).

Residues 1 to 45 are disordered; it reads MGPSLETPEPVEDVLANPLKQKPQLVAPEPEHCPGPESEQAGTAD. The [4Fe-4S] cluster site is built by C33, C47, C50, and C56. 86 to 93 is an ATP binding site; it reads GKGGVGKS. [4Fe-4S] cluster-binding residues include C259 and C262.

Belongs to the Mrp/NBP35 ATP-binding proteins family. NUBP1/NBP35 subfamily. In terms of assembly, heterotetramer of 2 NBP35 and 2 CFD1 chains. Requires [4Fe-4S] cluster as cofactor.

It localises to the cytoplasm. Its function is as follows. Component of the cytosolic iron-sulfur (Fe/S) protein assembly (CIA) machinery. Required for maturation of extramitochondrial Fe-S proteins. The NBP35-CFD1 heterotetramer forms a Fe-S scaffold complex, mediating the de novo assembly of an Fe-S cluster and its transfer to target apoproteins. In Chaetomium globosum (strain ATCC 6205 / CBS 148.51 / DSM 1962 / NBRC 6347 / NRRL 1970) (Soil fungus), this protein is Cytosolic Fe-S cluster assembly factor NBP35.